The chain runs to 137 residues: uncharacterized protein (137 aa).

This is an uncharacterized protein from Mycobacterium tuberculosis (strain ATCC 25618 / H37Rv).